Consider the following 575-residue polypeptide: Adenine deaminase (575 aa).

This sequence belongs to the metallo-dependent hydrolases superfamily. Adenine deaminase family. It depends on Mn(2+) as a cofactor.

It catalyses the reaction adenine + H2O + H(+) = hypoxanthine + NH4(+). The protein is Adenine deaminase of Nitratidesulfovibrio vulgaris (strain ATCC 29579 / DSM 644 / CCUG 34227 / NCIMB 8303 / VKM B-1760 / Hildenborough) (Desulfovibrio vulgaris).